Consider the following 540-residue polypeptide: Phenylalanine--tRNA ligase beta subunit (540 aa).

Positions 266–342 (LRPEKRTVSV…IAYGYDKIET (77 aa)) constitute a B5 domain. Residues Asp320, Asp326, Glu329, and Asp330 each coordinate Mg(2+).

Belongs to the phenylalanyl-tRNA synthetase beta subunit family. Type 2 subfamily. In terms of assembly, tetramer of two alpha and two beta subunits. It depends on Mg(2+) as a cofactor.

The protein localises to the cytoplasm. It catalyses the reaction tRNA(Phe) + L-phenylalanine + ATP = L-phenylalanyl-tRNA(Phe) + AMP + diphosphate + H(+). This Methanocorpusculum labreanum (strain ATCC 43576 / DSM 4855 / Z) protein is Phenylalanine--tRNA ligase beta subunit.